Consider the following 308-residue polypeptide: Putative transcription elongation factor S-II (308 aa).

Residues 5–84 (EETQSLCKQV…KDWKNVVDGK (80 aa)) enclose the TFIIS N-terminal domain. The segment at 82–126 (DGKSKSQDDGGAPPAKKHRKESVEEAKPEKKKIEAPYKRPEPSSR) is disordered. Over residues 102-125 (ESVEEAKPEKKKIEAPYKRPEPSS) the composition is skewed to basic and acidic residues. A TFIIS central domain is found at 148-263 (TRLKSAQLLL…EHQMSVQQGT (116 aa)). Residues 266-306 (DMFKCGKCGKKNCTYTQLQTRSSDEPMTTFVFCLECGNRWK) form a TFIIS-type zinc finger. 4 residues coordinate Zn(2+): Cys270, Cys273, Cys298, and Cys301.

The protein belongs to the TFS-II family.

It localises to the nucleus. Necessary for efficient RNA polymerase II transcription elongation past template-encoded arresting sites. The arresting sites in DNA have the property of trapping a certain fraction of elongating RNA polymerases that pass through, resulting in locked ternary complexes. Cleavage of the nascent transcript by S-II allows the resumption of elongation from the new 3'-terminus. This chain is Putative transcription elongation factor S-II, found in Caenorhabditis elegans.